Reading from the N-terminus, the 194-residue chain is Porimin (194 aa).

The N-terminal stretch at 1-24 (MALCARAALLLGALQVLALPGAVA) is a signal peptide. Over 25–151 (QETYAQGSPS…PTKGKGSKFD (127 aa)) the chain is Extracellular. N-linked (GlcNAc...) asparagine glycosylation is found at N36, N47, N51, N59, N76, and N114. A disordered region spans residues 88–124 (KVSTPGVSPHVTPSASKSTPKTSASPNSTQTSASMTT). Positions 99–124 (TPSASKSTPKTSASPNSTQTSASMTT) are enriched in low complexity. A helical transmembrane segment spans residues 152 to 172 (AGSFVGGIVLTLGVLSILYIG). The Cytoplasmic segment spans residues 173-194 (CKMYYSRRGIRYRSIDEHDAII). A Phosphoserine modification is found at S186.

Belongs to the CD164 family.

The protein localises to the membrane. Its function is as follows. Implicated in oncotic cell death, characterized by cell swelling, organelle swelling, vacuolization and increased membrane permeability. The chain is Porimin (Tmem123) from Rattus norvegicus (Rat).